Reading from the N-terminus, the 55-residue chain is Ovomucoid (55 aa).

Positions 5 to 55 (VDCSEHPKPACTLDYRPICGSDSKTYSNKCDFCNAVMDSNGTLTLSHFGKC) constitute a Kazal-like domain. Cystine bridges form between C7/C37, C15/C34, and C23/C55. N-linked (GlcNAc...) asparagine glycosylation is present at N44.

The protein localises to the secreted. The chain is Ovomucoid from Dacelo novaeguineae (Laughing kookaburra).